The primary structure comprises 244 residues: Adenosylcobinamide-GDP ribazoletransferase (244 aa).

5 helical membrane passes run 33 to 53 (WFAVVGLLVGALVAALGWLGA), 57 to 77 (PWLAALLMLVTWVWVTGGLHL), 109 to 129 (FAVITLALQLLAKLVLLMLAV), 132 to 152 (GVGWSALVLLPAWARLGAVWW), and 176 to 196 (FWLSWLLLAALSAWLAPVLLL).

This sequence belongs to the CobS family. Mg(2+) serves as cofactor.

Its subcellular location is the cell inner membrane. The catalysed reaction is alpha-ribazole + adenosylcob(III)inamide-GDP = adenosylcob(III)alamin + GMP + H(+). It carries out the reaction alpha-ribazole 5'-phosphate + adenosylcob(III)inamide-GDP = adenosylcob(III)alamin 5'-phosphate + GMP + H(+). It functions in the pathway cofactor biosynthesis; adenosylcobalamin biosynthesis; adenosylcobalamin from cob(II)yrinate a,c-diamide: step 7/7. In terms of biological role, joins adenosylcobinamide-GDP and alpha-ribazole to generate adenosylcobalamin (Ado-cobalamin). Also synthesizes adenosylcobalamin 5'-phosphate from adenosylcobinamide-GDP and alpha-ribazole 5'-phosphate. This chain is Adenosylcobinamide-GDP ribazoletransferase, found in Laribacter hongkongensis (strain HLHK9).